The primary structure comprises 453 residues: Serine/threonine-protein phosphatase 2A 55 kDa regulatory subunit B delta isoform (453 aa).

4 WD repeats span residues 32-71 (AEAD…KGRA), 97-138 (EIEE…KRAE), 181-219 (AHTY…RSFN), and 230-270 (ELTE…LCDR). Residue S285 is modified to Phosphoserine. WD repeat units lie at residues 289–327 (EIIS…RPVE), 344–385 (ENDC…DVTL), and 420–452 (DFNK…QDKI). Residue Y305 is modified to Phosphotyrosine. The residue at position 308 (T308) is a Phosphothreonine.

This sequence belongs to the phosphatase 2A regulatory subunit B family. PP2A consists of a common heterodimeric core enzyme, composed of a 36 kDa catalytic subunit (subunit C) and a 65 kDa constant regulatory subunit (PR65 or subunit A), that associates with a variety of regulatory subunits. Proteins that associate with the core dimer include three families of regulatory subunits B (the R2/B/PR55/B55, R3/B''/PR72/PR130/PR59 and R5/B'/B56 families), the 48 kDa variable regulatory subunit, viral proteins, and cell signaling molecules. Interacts with IER5.

It is found in the cytoplasm. Functionally, substrate-recognition subunit of protein phosphatase 2A (PP2A) that plays a key role in cell cycle by controlling mitosis entry and exit. Involved in chromosome clustering during late mitosis by mediating dephosphorylation of MKI67. The activity of PP2A complexes containing PPP2R2D (PR55-delta) fluctuate during the cell cycle: the activity is high in interphase and low in mitosis. This Mus musculus (Mouse) protein is Serine/threonine-protein phosphatase 2A 55 kDa regulatory subunit B delta isoform.